Consider the following 144-residue polypeptide: Maximins 6/Hv (144 aa).

A signal peptide spans 1 to 18 (MNFKYIVAVSFLIASGYA). The propeptide occupies 19–43 (RSEENDVQSLSQREVLEEETLREIR). An Asparagine amide modification is found at N70. Positions 74–123 (TAKGHEVMKRLEAVMRDLDSLDHPEEASERETRGFNQEEIANLFTKKEKR) are excised as a propeptide. I143 carries the isoleucine amide modification.

This sequence belongs to the bombinin family. In terms of tissue distribution, expressed by the skin glands.

Its subcellular location is the secreted. Its function is as follows. Shows antimicrobial activity against bacteria and against the fungus C.albicans. It has little hemolytic activity. Shows antimicrobial activity against bacteria and against the fungus C.albicans. Shows strong hemolytic activity. The sequence is that of Maximins 6/Hv from Bombina maxima (Giant fire-bellied toad).